Reading from the N-terminus, the 255-residue chain is Proteasome subunit alpha 2 (255 aa).

A disordered region spans residues 229 to 255; that stretch reads AGSSLEEMLPTPAATEDAPPANGDAPS. A compositionally biased stretch (low complexity) spans 238–249; that stretch reads PTPAATEDAPPA.

It belongs to the peptidase T1A family. As to quaternary structure, the 20S proteasome core is composed of 14 alpha and 14 beta subunits that assemble into four stacked heptameric rings, resulting in a barrel-shaped structure. The two inner rings, each composed of seven catalytic beta subunits, are sandwiched by two outer rings, each composed of seven alpha subunits. All four combinations of alpha- and beta-subunits (beta2-alpha1, beta2-alpha2, beta1-alpha2 and beta1-alpha1) yield fully assembled and proteolytically active proteasomes. The catalytic chamber with the active sites is on the inside of the barrel. Has probably a gated structure, the ends of the cylinder being occluded by the N-termini of the alpha-subunits. Is likely capped by the proteasome-associated ATPase, ARC. In terms of processing, the N-terminus is blocked.

The protein resides in the cytoplasm. Its pathway is protein degradation; proteasomal Pup-dependent pathway. The formation of the proteasomal ATPase ARC-20S proteasome complex, likely via the docking of the C-termini of ARC into the intersubunit pockets in the alpha-rings, may trigger opening of the gate for substrate entry. Interconversion between the open-gate and close-gate conformations leads to a dynamic regulation of the 20S proteasome proteolysis activity. Functionally, component of the proteasome core, a large protease complex with broad specificity involved in protein degradation. The R.erythropolis proteasomes are able to cleave oligopeptides after Tyr, Phe and Leu, very poorly after Arg but not after Glu. Thus, displays chymotrypsin-like activity, low trypsin-like activity but no caspase-like activity. This chain is Proteasome subunit alpha 2, found in Rhodococcus erythropolis (Arthrobacter picolinophilus).